Here is a 179-residue protein sequence, read N- to C-terminus: NADH dehydrogenase [ubiquinone] 1 beta subcomplex subunit 9 (179 aa).

A2 bears the N-acetylalanine mark. S85 bears the Phosphoserine mark.

Belongs to the complex I LYR family. In terms of assembly, mammalian complex I is composed of 45 different subunits.

The protein resides in the mitochondrion inner membrane. Its function is as follows. Accessory subunit of the mitochondrial membrane respiratory chain NADH dehydrogenase (Complex I), that is believed to be not involved in catalysis. Complex I functions in the transfer of electrons from NADH to the respiratory chain. The immediate electron acceptor for the enzyme is believed to be ubiquinone. The sequence is that of NADH dehydrogenase [ubiquinone] 1 beta subcomplex subunit 9 (Ndufb9) from Mus musculus (Mouse).